Consider the following 185-residue polypeptide: Probable NEDD8-conjugating enzyme Ubc12-like (185 aa).

Positions 8–29 (KEKQREESQSNNGRGASTVKKQ) are disordered. The span at 16 to 28 (QSNNGRGASTVKK) shows a compositional bias: polar residues. The UBC core domain maps to 31 to 176 (AGELRLHKDI…VRRAMMGGQV (146 aa)). Cys114 acts as the Glycyl thioester intermediate in catalysis.

This sequence belongs to the ubiquitin-conjugating enzyme family. UBC12 subfamily.

The protein operates within protein modification; protein neddylation. Accepts the ubiquitin-like protein NEDD8/RUB1 from the ECR1-AXR1 E1 complex and catalyzes its covalent attachment to other proteins. This Arabidopsis thaliana (Mouse-ear cress) protein is Probable NEDD8-conjugating enzyme Ubc12-like (RCE2).